The primary structure comprises 272 residues: Probable feruloyl esterase C (272 aa).

The N-terminal stretch at 1–22 is a signal peptide; the sequence is MLPTILYSAILALSALTPSALA.

This sequence belongs to the faeC family.

It is found in the secreted. The enzyme catalyses feruloyl-polysaccharide + H2O = ferulate + polysaccharide.. In terms of biological role, involved in degradation of plant cell walls. Hydrolyzes the feruloyl-arabinose ester bond in arabinoxylans, and the feruloyl-galactose ester bond in pectin. Active against paranitrophenyl-acetate, methyl ferulate and wheat arabinoxylan. The sequence is that of Probable feruloyl esterase C (faeC-1) from Aspergillus clavatus (strain ATCC 1007 / CBS 513.65 / DSM 816 / NCTC 3887 / NRRL 1 / QM 1276 / 107).